The primary structure comprises 177 residues: Large ribosomal subunit protein uL6 (177 aa).

This sequence belongs to the universal ribosomal protein uL6 family. Part of the 50S ribosomal subunit.

This protein binds to the 23S rRNA, and is important in its secondary structure. It is located near the subunit interface in the base of the L7/L12 stalk, and near the tRNA binding site of the peptidyltransferase center. The protein is Large ribosomal subunit protein uL6 of Alteromonas mediterranea (strain DSM 17117 / CIP 110805 / LMG 28347 / Deep ecotype).